The following is a 102-amino-acid chain: NADH-quinone oxidoreductase subunit K (102 aa).

Helical transmembrane passes span 5 to 25 (LGHFLSLGAMLFALSVIGIFL), 31 to 51 (IVLLMAIELMLLAVNTNFVAF), and 62 to 82 (IFVFFILTVAAAESAIGLAIL).

It belongs to the complex I subunit 4L family. As to quaternary structure, NDH-1 is composed of 14 different subunits. Subunits NuoA, H, J, K, L, M, N constitute the membrane sector of the complex.

The protein resides in the cell inner membrane. The enzyme catalyses a quinone + NADH + 5 H(+)(in) = a quinol + NAD(+) + 4 H(+)(out). NDH-1 shuttles electrons from NADH, via FMN and iron-sulfur (Fe-S) centers, to quinones in the respiratory chain. The immediate electron acceptor for the enzyme in this species is believed to be ubiquinone. Couples the redox reaction to proton translocation (for every two electrons transferred, four hydrogen ions are translocated across the cytoplasmic membrane), and thus conserves the redox energy in a proton gradient. In Albidiferax ferrireducens (strain ATCC BAA-621 / DSM 15236 / T118) (Rhodoferax ferrireducens), this protein is NADH-quinone oxidoreductase subunit K.